Reading from the N-terminus, the 466-residue chain is 3-isopropylmalate dehydratase large subunit 1 (466 aa).

[4Fe-4S] cluster contacts are provided by C347, C407, and C410.

The protein belongs to the aconitase/IPM isomerase family. LeuC type 1 subfamily. Heterodimer of LeuC and LeuD. It depends on [4Fe-4S] cluster as a cofactor.

The enzyme catalyses (2R,3S)-3-isopropylmalate = (2S)-2-isopropylmalate. It functions in the pathway amino-acid biosynthesis; L-leucine biosynthesis; L-leucine from 3-methyl-2-oxobutanoate: step 2/4. Catalyzes the isomerization between 2-isopropylmalate and 3-isopropylmalate, via the formation of 2-isopropylmaleate. The sequence is that of 3-isopropylmalate dehydratase large subunit 1 from Salmonella choleraesuis (strain SC-B67).